The chain runs to 149 residues: Transcriptional repressor NrdR (149 aa).

A zinc finger lies at 3 to 34; the sequence is CPFCSATDTKVIDSRLVSDGHQVRRRRQCLAC. Positions 49–139 constitute an ATP-cone domain; it reads PKVIKSNGNR…VYRSFEDIKE (91 aa).

The protein belongs to the NrdR family. Zn(2+) is required as a cofactor.

Functionally, negatively regulates transcription of bacterial ribonucleotide reductase nrd genes and operons by binding to NrdR-boxes. The protein is Transcriptional repressor NrdR of Aliivibrio salmonicida (strain LFI1238) (Vibrio salmonicida (strain LFI1238)).